The primary structure comprises 178 residues: Large ribosomal subunit protein uL6 (178 aa).

It belongs to the universal ribosomal protein uL6 family. Part of the 50S ribosomal subunit.

Functionally, this protein binds to the 23S rRNA, and is important in its secondary structure. It is located near the subunit interface in the base of the L7/L12 stalk, and near the tRNA binding site of the peptidyltransferase center. In Lactiplantibacillus plantarum (strain ATCC BAA-793 / NCIMB 8826 / WCFS1) (Lactobacillus plantarum), this protein is Large ribosomal subunit protein uL6.